The following is a 280-amino-acid chain: F-box only protein 27 (280 aa).

The F-box domain maps to 20-67 (VLDLSRLPPELLLLVLSHVPPRTLLMHCRRVCRAWRALVDGQALWLLL). Residues 101-277 (FCALRPLGRN…VTNSSVIIRV (177 aa)) enclose the FBA domain.

Part of a SCF (SKP1-cullin-F-box) protein ligase complex. Interacts with SKP1 and CUL1. Detected in brain, heart and muscle.

Its function is as follows. Substrate-recognition component of the SCF (SKP1-CUL1-F-box protein)-type E3 ubiquitin ligase complex. Able to recognize and bind complex-type oligosaccharides. The polypeptide is F-box only protein 27 (Fbxo27) (Mus musculus (Mouse)).